A 307-amino-acid chain; its full sequence is Recombination-associated protein RdgC (307 aa).

Belongs to the RdgC family.

Its subcellular location is the cytoplasm. It localises to the nucleoid. Functionally, may be involved in recombination. The chain is Recombination-associated protein RdgC from Burkholderia cenocepacia (strain ATCC BAA-245 / DSM 16553 / LMG 16656 / NCTC 13227 / J2315 / CF5610) (Burkholderia cepacia (strain J2315)).